We begin with the raw amino-acid sequence, 318 residues long: Ribose-phosphate pyrophosphokinase (318 aa).

ATP is bound by residues 46–48 and 105–106; these read DGE and RQ. Residues H139 and D178 each coordinate Mg(2+). The active site involves K201. Residues R203, D227, and 231–235 contribute to the D-ribose 5-phosphate site; that span reads DTAGT.

Belongs to the ribose-phosphate pyrophosphokinase family. Class I subfamily. In terms of assembly, homohexamer. It depends on Mg(2+) as a cofactor.

It is found in the cytoplasm. It carries out the reaction D-ribose 5-phosphate + ATP = 5-phospho-alpha-D-ribose 1-diphosphate + AMP + H(+). Its pathway is metabolic intermediate biosynthesis; 5-phospho-alpha-D-ribose 1-diphosphate biosynthesis; 5-phospho-alpha-D-ribose 1-diphosphate from D-ribose 5-phosphate (route I): step 1/1. Involved in the biosynthesis of the central metabolite phospho-alpha-D-ribosyl-1-pyrophosphate (PRPP) via the transfer of pyrophosphoryl group from ATP to 1-hydroxyl of ribose-5-phosphate (Rib-5-P). This chain is Ribose-phosphate pyrophosphokinase, found in Helicobacter pylori (strain ATCC 700392 / 26695) (Campylobacter pylori).